The sequence spans 142 residues: NTF2-related export protein 2 (142 aa).

In terms of domain architecture, NTF2 spans 17 to 136 (AAEEFVNIYY…WKIASDCFRF (120 aa)).

As to quaternary structure, associates with NXF1, NXF2, NXF3 and NXF5.

The protein localises to the nucleus. Its subcellular location is the cytoplasm. In terms of biological role, regulator of protein export for NES-containing proteins. Also plays a role in mRNA nuclear export. The chain is NTF2-related export protein 2 (Nxt2) from Mus musculus (Mouse).